A 343-amino-acid polypeptide reads, in one-letter code: Cytoplasmic tRNA 2-thiolation protein 1 (343 aa).

The protein belongs to the TtcA family. CTU1/NCS6/ATPBD3 subfamily.

It localises to the cytoplasm. It participates in tRNA modification; 5-methoxycarbonylmethyl-2-thiouridine-tRNA biosynthesis. In terms of biological role, plays a central role in 2-thiolation of mcm(5)S(2)U at tRNA wobble positions of tRNA(Lys), tRNA(Glu) and tRNA(Gln). Directly binds tRNAs and probably acts by catalyzing adenylation of tRNAs, an intermediate required for 2-thiolation. It is unclear whether it acts as a sulfurtransferase that transfers sulfur from thiocarboxylated URM1 onto the uridine of tRNAs at wobble position. The protein is Cytoplasmic tRNA 2-thiolation protein 1 of Drosophila ananassae (Fruit fly).